Reading from the N-terminus, the 135-residue chain is Protein E6 (135 aa).

Zinc fingers lie at residues 11-47 (CVFC…CTAC) and 83-119 (CMYC…CYTC).

The protein belongs to the papillomaviridae E6 protein family. As to quaternary structure, forms homodimers. Interacts with ubiquitin-protein ligase UBE3A/E6-AP; this interaction stimulates UBE3A ubiquitin activity. Interacts with host BAK1.

It is found in the host cytoplasm. The protein localises to the host nucleus. Functionally, plays a major role in the induction and maintenance of cellular transformation. E6 associates with host UBE3A/E6-AP ubiquitin-protein ligase and modulates its activity. Protects host keratinocytes from apoptosis by mediating the degradation of host BAK1. May also inhibit host immune response. The polypeptide is Protein E6 (Odocoileus virginianus papillomavirus 1 (DPV)).